The sequence spans 249 residues: Sugar fermentation stimulation protein homolog (249 aa).

This sequence belongs to the SfsA family.

In Synechococcus sp. (strain RCC307), this protein is Sugar fermentation stimulation protein homolog.